We begin with the raw amino-acid sequence, 653 residues long: Dystrotelin (653 aa).

The ZZ-type zinc finger occupies 223–279 (THPVRCSVCRTFPIIGLRYHCLKCLDFDICELCFLSGLHKNSHEKSHTVMEECVQMS). Zn(2+)-binding residues include Cys-228, Cys-231, Cys-243, Cys-246, Cys-252, Cys-255, His-265, and His-269. A coiled-coil region spans residues 384-411 (RDSLNTLLRERRLLRKQLHRYKQKLQGT).

In terms of tissue distribution, strongly expressed in the nervous and muscular tissues.

Its subcellular location is the cell membrane. This chain is Dystrotelin (Dytn), found in Mus musculus (Mouse).